Reading from the N-terminus, the 60-residue chain is Light-harvesting protein B-800/850 alpha chain (60 aa).

The Cytoplasmic segment spans residues 1 to 14 (MNNAKIWTVVKPST). Residues 15–35 (GIPLILGAVAVAALIVHAGLL) form a helical membrane-spanning segment. Residue His31 coordinates a bacteriochlorophyll. At 36–60 (TNTTWFANYWNGNPMATVVAVAPAQ) the chain is on the periplasmic side.

Belongs to the antenna complex alpha subunit family. In terms of assembly, the core complex is formed by different alpha and beta chains, binding bacteriochlorophyll molecules, and arranged most probably in tetrameric structures disposed around the reaction center. The non-pigmented gamma chains may constitute additional components.

The protein localises to the cell inner membrane. In terms of biological role, antenna complexes are light-harvesting systems, which transfer the excitation energy to the reaction centers. The polypeptide is Light-harvesting protein B-800/850 alpha chain (pucA) (Rhodobacter capsulatus (Rhodopseudomonas capsulata)).